The following is a 218-amino-acid chain: Thiopurine S-methyltransferase (218 aa).

4 residues coordinate S-adenosyl-L-methionine: tryptophan 10, leucine 45, glutamate 66, and arginine 123.

The protein belongs to the class I-like SAM-binding methyltransferase superfamily. TPMT family.

It is found in the cytoplasm. The enzyme catalyses S-adenosyl-L-methionine + a thiopurine = S-adenosyl-L-homocysteine + a thiopurine S-methylether.. In Shewanella baltica (strain OS185), this protein is Thiopurine S-methyltransferase.